We begin with the raw amino-acid sequence, 601 residues long: Elongation factor 4 (601 aa).

The tr-type G domain occupies 7 to 189; that stretch reads DNIRNFSIVA…AIVKRLPPPK (183 aa). GTP contacts are provided by residues 19-24 and 136-139; these read DHGKST and NKVD.

Belongs to the TRAFAC class translation factor GTPase superfamily. Classic translation factor GTPase family. LepA subfamily.

Its subcellular location is the cell inner membrane. It carries out the reaction GTP + H2O = GDP + phosphate + H(+). Functionally, required for accurate and efficient protein synthesis under certain stress conditions. May act as a fidelity factor of the translation reaction, by catalyzing a one-codon backward translocation of tRNAs on improperly translocated ribosomes. Back-translocation proceeds from a post-translocation (POST) complex to a pre-translocation (PRE) complex, thus giving elongation factor G a second chance to translocate the tRNAs correctly. Binds to ribosomes in a GTP-dependent manner. This Methylorubrum populi (strain ATCC BAA-705 / NCIMB 13946 / BJ001) (Methylobacterium populi) protein is Elongation factor 4.